A 147-amino-acid chain; its full sequence is MRNTSKYYLVDASVLPKVFIKVVEAKRILASGAIKNVNEAVRKVGISRSAYYKYKDHIFPFYETSQGKVITLFFTVEDYAGILSSIINRIADSKANIITINQNIPINGLADVTITIETGQMTRDIKDLLDDISSIEGVKRQEILARE.

Residues 71-146 (TLFFTVEDYA…GVKRQEILAR (76 aa)) enclose the ACT domain.

This sequence belongs to the UPF0735 family.

In Acetivibrio thermocellus (strain ATCC 27405 / DSM 1237 / JCM 9322 / NBRC 103400 / NCIMB 10682 / NRRL B-4536 / VPI 7372) (Clostridium thermocellum), this protein is UPF0735 ACT domain-containing protein Cthe_1377.